Consider the following 234-residue polypeptide: Enolase-phosphatase E1 (234 aa).

The Mg(2+) site is built by Asp13 and Glu15. Substrate-binding positions include 127–128 (SS) and Lys164. Residue Asp191 participates in Mg(2+) binding.

This sequence belongs to the HAD-like hydrolase superfamily. MasA/MtnC family. In terms of assembly, monomer. Requires Mg(2+) as cofactor.

The protein localises to the cytoplasm. It localises to the nucleus. The enzyme catalyses 5-methylsulfanyl-2,3-dioxopentyl phosphate + H2O = 1,2-dihydroxy-5-(methylsulfanyl)pent-1-en-3-one + phosphate. The protein operates within amino-acid biosynthesis; L-methionine biosynthesis via salvage pathway; L-methionine from S-methyl-5-thio-alpha-D-ribose 1-phosphate: step 3/6. It functions in the pathway amino-acid biosynthesis; L-methionine biosynthesis via salvage pathway; L-methionine from S-methyl-5-thio-alpha-D-ribose 1-phosphate: step 4/6. In terms of biological role, bifunctional enzyme that catalyzes the enolization of 2,3-diketo-5-methylthiopentyl-1-phosphate (DK-MTP-1-P) into the intermediate 2-hydroxy-3-keto-5-methylthiopentenyl-1-phosphate (HK-MTPenyl-1-P), which is then dephosphorylated to form the acireductone 1,2-dihydroxy-3-keto-5-methylthiopentene (DHK-MTPene). The chain is Enolase-phosphatase E1 from Podospora anserina (strain S / ATCC MYA-4624 / DSM 980 / FGSC 10383) (Pleurage anserina).